The sequence spans 359 residues: Membrane-bound lytic murein transglycosylase C (359 aa).

The signal sequence occupies residues 1 to 16 (MKKYLALALIAPLLIS). Cysteine 17 carries N-palmitoyl cysteine lipidation. Cysteine 17 is lipidated: S-diacylglycerol cysteine.

This sequence belongs to the transglycosylase Slt family.

The protein localises to the cell outer membrane. It catalyses the reaction Exolytic cleavage of the (1-&gt;4)-beta-glycosidic linkage between N-acetylmuramic acid (MurNAc) and N-acetylglucosamine (GlcNAc) residues in peptidoglycan, from either the reducing or the non-reducing ends of the peptidoglycan chains, with concomitant formation of a 1,6-anhydrobond in the MurNAc residue.. Its function is as follows. Murein-degrading enzyme. May play a role in recycling of muropeptides during cell elongation and/or cell division. The protein is Membrane-bound lytic murein transglycosylase C of Escherichia coli O8 (strain IAI1).